The following is a 359-amino-acid chain: Histidinol-phosphate aminotransferase (359 aa).

Residue lysine 217 is modified to N6-(pyridoxal phosphate)lysine.

The protein belongs to the class-II pyridoxal-phosphate-dependent aminotransferase family. Histidinol-phosphate aminotransferase subfamily. As to quaternary structure, homodimer. Pyridoxal 5'-phosphate is required as a cofactor.

The enzyme catalyses L-histidinol phosphate + 2-oxoglutarate = 3-(imidazol-4-yl)-2-oxopropyl phosphate + L-glutamate. It functions in the pathway amino-acid biosynthesis; L-histidine biosynthesis; L-histidine from 5-phospho-alpha-D-ribose 1-diphosphate: step 7/9. In Roseobacter denitrificans (strain ATCC 33942 / OCh 114) (Erythrobacter sp. (strain OCh 114)), this protein is Histidinol-phosphate aminotransferase.